An 875-amino-acid chain; its full sequence is Alanine--tRNA ligase (875 aa).

Residues H564, H568, C666, and H670 each contribute to the Zn(2+) site.

This sequence belongs to the class-II aminoacyl-tRNA synthetase family. In terms of assembly, homotetramer. Zn(2+) is required as a cofactor.

The protein resides in the cytoplasm. It carries out the reaction tRNA(Ala) + L-alanine + ATP = L-alanyl-tRNA(Ala) + AMP + diphosphate. In terms of biological role, catalyzes the attachment of alanine to tRNA(Ala) in a two-step reaction: alanine is first activated by ATP to form Ala-AMP and then transferred to the acceptor end of tRNA(Ala). Also edits incorrectly charged Ser-tRNA(Ala) and Gly-tRNA(Ala) via its editing domain. This Klebsiella pneumoniae subsp. pneumoniae (strain ATCC 700721 / MGH 78578) protein is Alanine--tRNA ligase.